Here is a 907-residue protein sequence, read N- to C-terminus: Lipoxygenase 1, chloroplastic (907 aa).

The N-terminal 49 residues, 1–49 (MALAKQIMGASLMDQKTSVFGSNLCLNHVLVNKHRLRLRKTRKNGSMVV), are a transit peptide targeting the chloroplast. Positions 85–209 (DFFKDTIFRK…DLPNPRIFFT (125 aa)) constitute a PLAT domain. The Lipoxygenase domain occupies 212-907 (PYLPDETPVG…CRGVPNSISI (696 aa)). Residues histidine 567, histidine 572, histidine 758, asparagine 762, and isoleucine 907 each contribute to the Fe cation site.

This sequence belongs to the lipoxygenase family. The cofactor is Fe cation. In terms of tissue distribution, confined to glandular trichomes in flowers, and, at low levels, in leaves.

It localises to the plastid. The protein resides in the chloroplast. The catalysed reaction is (9Z,12Z,15Z)-octadecatrienoate + O2 = 13-hydroperoxy-(9Z,11E,15Z)-octadecatrienoate. It participates in lipid metabolism; oxylipin biosynthesis. It functions in the pathway isoprenoid biosynthesis. Functionally, component of the monoterpenoid pyrethrins biosynthesis; pyrethrins are widely used plant-derived pesticide. Plant lipoxygenases may be involved in a number of diverse aspects of plant physiology including growth and development, pest resistance, and senescence or responses to wounding. Catalyzes the hydroperoxidation of lipids containing a cis,cis-1,4-pentadiene structure. Mediates the peroxidation of linolenic acid leading to the production of 13-hydroperoxylinolenic acid. This Tanacetum cinerariifolium (Dalmatian daisy) protein is Lipoxygenase 1, chloroplastic.